We begin with the raw amino-acid sequence, 323 residues long: GTP 3',8-cyclase (323 aa).

The Radical SAM core domain maps to 4 to 228; that stretch reads KYGRSIDYLR…VPVNIQNNGP (225 aa). Residue R13 coordinates GTP. [4Fe-4S] cluster-binding residues include C20 and C24. Y26 is a binding site for S-adenosyl-L-methionine. Residue C27 coordinates [4Fe-4S] cluster. R63 provides a ligand contact to GTP. An S-adenosyl-L-methionine-binding site is contributed by G67. T94 contacts GTP. S118 is an S-adenosyl-L-methionine binding site. K155 provides a ligand contact to GTP. M189 contacts S-adenosyl-L-methionine. Residues C252 and C255 each coordinate [4Fe-4S] cluster. GTP is bound at residue 257–259; it reads RMR. C269 provides a ligand contact to [4Fe-4S] cluster.

The protein belongs to the radical SAM superfamily. MoaA family. In terms of assembly, monomer and homodimer. It depends on [4Fe-4S] cluster as a cofactor.

It carries out the reaction GTP + AH2 + S-adenosyl-L-methionine = (8S)-3',8-cyclo-7,8-dihydroguanosine 5'-triphosphate + 5'-deoxyadenosine + L-methionine + A + H(+). The protein operates within cofactor biosynthesis; molybdopterin biosynthesis. Its function is as follows. Catalyzes the cyclization of GTP to (8S)-3',8-cyclo-7,8-dihydroguanosine 5'-triphosphate. This is GTP 3',8-cyclase from Petrotoga mobilis (strain DSM 10674 / SJ95).